Here is a 290-residue protein sequence, read N- to C-terminus: Cell division protein ZipA (290 aa).

A topological domain (periplasmic) is located at residue M1. A helical transmembrane segment spans residues 2-22 (DIGLREWLIVIGLIVIAGILF). Over 23-290 (DGWRRMRGGK…HERRSLMQKR (268 aa)) the chain is Cytoplasmic. Residues 66–143 (REPSFDEQDL…REKAPSVAAA (78 aa)) form a disordered region. The span at 81-99 (REGKERKGGKRQDEPRQGD) shows a compositional bias: basic and acidic residues. The segment covering 100–114 (LDLDEGMALEADPSD) has biased composition (acidic residues).

This sequence belongs to the ZipA family. Interacts with FtsZ via their C-terminal domains.

It is found in the cell inner membrane. Essential cell division protein that stabilizes the FtsZ protofilaments by cross-linking them and that serves as a cytoplasmic membrane anchor for the Z ring. Also required for the recruitment to the septal ring of downstream cell division proteins. In Pseudomonas paraeruginosa (strain DSM 24068 / PA7) (Pseudomonas aeruginosa (strain PA7)), this protein is Cell division protein ZipA.